We begin with the raw amino-acid sequence, 256 residues long: Imidazole glycerol phosphate synthase subunit HisF (256 aa).

Catalysis depends on residues aspartate 12 and aspartate 131.

The protein belongs to the HisA/HisF family. In terms of assembly, heterodimer of HisH and HisF.

The protein resides in the cytoplasm. The enzyme catalyses 5-[(5-phospho-1-deoxy-D-ribulos-1-ylimino)methylamino]-1-(5-phospho-beta-D-ribosyl)imidazole-4-carboxamide + L-glutamine = D-erythro-1-(imidazol-4-yl)glycerol 3-phosphate + 5-amino-1-(5-phospho-beta-D-ribosyl)imidazole-4-carboxamide + L-glutamate + H(+). Its pathway is amino-acid biosynthesis; L-histidine biosynthesis; L-histidine from 5-phospho-alpha-D-ribose 1-diphosphate: step 5/9. Functionally, IGPS catalyzes the conversion of PRFAR and glutamine to IGP, AICAR and glutamate. The HisF subunit catalyzes the cyclization activity that produces IGP and AICAR from PRFAR using the ammonia provided by the HisH subunit. This is Imidazole glycerol phosphate synthase subunit HisF from Micrococcus luteus (strain ATCC 4698 / DSM 20030 / JCM 1464 / CCM 169 / CCUG 5858 / IAM 1056 / NBRC 3333 / NCIMB 9278 / NCTC 2665 / VKM Ac-2230) (Micrococcus lysodeikticus).